The chain runs to 246 residues: Phosphonates import ATP-binding protein PhnC (246 aa).

The region spanning 2–246 (IKFENVSKIY…ILDEVYRKEA (245 aa)) is the ABC transporter domain. 35 to 42 (GTSGAGKS) provides a ligand contact to ATP.

The protein belongs to the ABC transporter superfamily. Phosphonates importer (TC 3.A.1.9.1) family. As to quaternary structure, the complex is composed of two ATP-binding proteins (PhnC), two transmembrane proteins (PhnE) and a solute-binding protein (PhnD).

The protein resides in the cell membrane. It catalyses the reaction phosphonate(out) + ATP + H2O = phosphonate(in) + ADP + phosphate + H(+). Functionally, part of the ABC transporter complex PhnCDE involved in phosphonates import. Responsible for energy coupling to the transport system. The protein is Phosphonates import ATP-binding protein PhnC of Lactococcus lactis subsp. lactis (strain IL1403) (Streptococcus lactis).